We begin with the raw amino-acid sequence, 502 residues long: Carbon catabolite-derepressing protein kinase (502 aa).

The 256-residue stretch at 14-269 (YYLGKILGVG…IGEIRKHSWF (256 aa)) folds into the Protein kinase domain. Residues 20-28 (LGVGTFAKV) and Lys-43 each bind ATP. Asp-140 functions as the Proton acceptor in the catalytic mechanism. Residue Thr-173 is modified to Phosphothreonine; by autocatalysis. One can recognise a UBA domain in the interval 290–330 (MIDEDTLRDVVKLGYDKDHVCESLCNRLQNEETVAYYLLLD). Residues 453 to 501 (NSRLPAVIKFEIQLYKTKDDKYLLDMQRVTGPQLLFLEFCAAFLTNLRV) form the KA1 domain.

Belongs to the protein kinase superfamily. CAMK Ser/Thr protein kinase family. SNF1 subfamily.

It catalyses the reaction L-seryl-[protein] + ATP = O-phospho-L-seryl-[protein] + ADP + H(+). It carries out the reaction L-threonyl-[protein] + ATP = O-phospho-L-threonyl-[protein] + ADP + H(+). In terms of biological role, essential for release from glucose repression. This chain is Carbon catabolite-derepressing protein kinase (RKIN1), found in Secale cereale (Rye).